The primary structure comprises 513 residues: Probable vesicular acetylcholine transporter-A (513 aa).

The Cytoplasmic segment spans residues Met-1–Arg-39. A helical transmembrane segment spans residues Ile-40–Val-60. Topologically, residues Pro-61–Gly-98 are lumenal, vesicle. Residues Asn-82 and Asn-86 are each glycosylated (N-linked (GlcNAc...) asparagine). Residues Val-99 to Ile-119 form a helical membrane-spanning segment. Over Asp-120 to Asp-125 the chain is Cytoplasmic. The chain crosses the membrane as a helical span at residues Ile-126–Glu-146. Topologically, residues Asn-147–Ser-156 are lumenal, vesicle. The helical transmembrane segment at Leu-157–Ala-174 threads the bilayer. The Cytoplasmic segment spans residues Asp-175–Ala-186. A helical membrane pass occupies residues Leu-187 to Val-207. Residues Leu-208 to Arg-215 are Lumenal, vesicle-facing. The chain crosses the membrane as a helical span at residues Phe-216–Leu-236. The Cytoplasmic portion of the chain corresponds to Lys-237–Met-257. A helical transmembrane segment spans residues Ile-258–Phe-278. The Lumenal, vesicle portion of the chain corresponds to Leu-279–Trp-296. N-linked (GlcNAc...) asparagine glycosylation is present at Asn-292. The chain crosses the membrane as a helical span at residues Gln-297–Val-317. Residues Lys-318–Gln-327 are Cytoplasmic-facing. The helical transmembrane segment at Trp-328–Cys-348 threads the bilayer. Residues Lys-349–Gln-353 lie on the Lumenal, vesicle side of the membrane. The helical transmembrane segment at Leu-354–Pro-374 threads the bilayer. At Thr-375–Ser-390 the chain is on the cytoplasmic side. The helical transmembrane segment at Val-391–Gly-411 threads the bilayer. The Lumenal, vesicle portion of the chain corresponds to Lys-412 to Gly-418. Residues Phe-419–Leu-439 traverse the membrane as a helical segment. Residues Leu-440–Ile-513 are Cytoplasmic-facing. Residues Arg-475–Ile-513 are disordered. Residues Glu-504 to Ile-513 are compositionally biased toward acidic residues.

Belongs to the major facilitator superfamily. Vesicular transporter family.

It localises to the membrane. Involved in acetylcholine transport into synaptic vesicles. This is Probable vesicular acetylcholine transporter-A from Danio rerio (Zebrafish).